We begin with the raw amino-acid sequence, 343 residues long: MKFIDEVSISLASGRGGPGCVSFRRESMQARGGPDGGNGGKGGDVIIRTSRHINSLVDIRQNKRYAAQSGRMGEGRQKSGMDGEDLILIVPQGTVFRNMDGEIIIDMTGISEHTLLKGGRGGKGNEFFKNSVNQAPEHAQPGEEGQEIEVRLELKLIADVGIVGFPNAGKSTLISRISAARPKIADYPFTTLTPNLGVVKAGDYSSFVVADIPGLVKGAHAGVGLGIQFLKHIERTRLFIHLVDASGMSGRDPLEDYTDINNELKMYDENNQDKEGFFPLSTRPQLVVLNKIDTLSESQLTKLKKQFKEASGSEPFAISAVTGKNIKEFVQELARQILKEEEE.

One can recognise an Obg domain in the interval 1–157 (MKFIDEVSIS…IEVRLELKLI (157 aa)). Residues 13-44 (SGRGGPGCVSFRRESMQARGGPDGGNGGKGGD) are disordered. Positions 33 to 43 (GPDGGNGGKGG) are enriched in gly residues. The OBG-type G domain maps to 158–338 (ADVGIVGFPN…FVQELARQIL (181 aa)). GTP-binding positions include 164–171 (GFPNAGKS), 189–193 (FTTLT), 211–214 (DIPG), 290–293 (NKID), and 319–321 (SAV). Residues Ser171 and Thr191 each coordinate Mg(2+).

This sequence belongs to the TRAFAC class OBG-HflX-like GTPase superfamily. OBG GTPase family. As to quaternary structure, monomer. Requires Mg(2+) as cofactor.

Its subcellular location is the cytoplasm. An essential GTPase which binds GTP, GDP and possibly (p)ppGpp with moderate affinity, with high nucleotide exchange rates and a fairly low GTP hydrolysis rate. Plays a role in control of the cell cycle, stress response, ribosome biogenesis and in those bacteria that undergo differentiation, in morphogenesis control. This chain is GTPase Obg, found in Bdellovibrio bacteriovorus (strain ATCC 15356 / DSM 50701 / NCIMB 9529 / HD100).